Reading from the N-terminus, the 193-residue chain is Large ribosomal subunit protein uL18 (193 aa).

It belongs to the universal ribosomal protein uL18 family. As to quaternary structure, part of the 50S ribosomal subunit. Contacts the 5S and 23S rRNAs.

This is one of the proteins that bind and probably mediate the attachment of the 5S RNA into the large ribosomal subunit, where it forms part of the central protuberance. In Methanococcus maripaludis (strain C6 / ATCC BAA-1332), this protein is Large ribosomal subunit protein uL18.